Consider the following 762-residue polypeptide: Centrosomal protein of 85 kDa (762 aa).

2 disordered regions span residues 1–26 (MAMQEKYPTEGISHVTSPSSDVIQKG) and 94–119 (VMPSTLGTSPAKPNSTPVGPSSSKLP). 2 stretches are compositionally biased toward polar residues: residues 14–26 (HVTSPSSDVIQKG) and 98–111 (TLGTSPAKPNSTPV). Residue S17 is modified to Phosphoserine. 2 positions are modified to phosphoserine: S126 and S141. Residues 257–433 (GLSKPLPSQV…QLIRESLKVA (177 aa)) are mediates interaction with NEK2 and is required for its function in the suppression of centrosome disjunction. Coiled-coil stretches lie at residues 334-657 (EHLL…RQAQ) and 723-750 (PDVIKRKLEEVQQLRRDIEDLRTTMSDR). A required for centrosome localization and for its function in the suppression of centrosome disjunction region spans residues 434 to 476 (LQKHSEEVKKQEERVKGRDKHINNLKKKCQKESEQNREKQQRI). Composition is skewed to basic and acidic residues over residues 443 to 455 (KQEERVKGRDKHI) and 463 to 474 (QKESEQNREKQQ). Disordered stretches follow at residues 443 to 474 (KQEERVKGRDKHINNLKKKCQKESEQNREKQQ) and 541 to 570 (EAEFSSAGHSLQDKQSVEETSGEGPEVEME). A Phosphoserine modification is found at S623.

This sequence belongs to the CEP85 family. As to quaternary structure, homodimer. Interacts with STIL (via N-terminus); this interaction is essential for robust PLK4 activation and efficient centriole assembly and for PLK4-dependent cell migration. Interacts with PLK4; required for CEP85 to be able to drive centriole duplication and cell migration.

Its subcellular location is the cytoplasm. It localises to the cytoskeleton. It is found in the microtubule organizing center. The protein localises to the centrosome. The protein resides in the spindle pole. Its subcellular location is the nucleus. It localises to the nucleolus. It is found in the centriole. The protein localises to the cell cortex. Acts as a regulator of centriole duplication through a direct interaction with STIL, a key factor involved in the early steps of centriole formation. The CEP85-STIL protein complex acts as a modulator of PLK4-driven cytoskeletal rearrangements and directional cell motility. Acts as a negative regulator of NEK2 to maintain the centrosome integrity in interphase. Suppresses centrosome disjunction by inhibiting NEK2 kinase activity. The polypeptide is Centrosomal protein of 85 kDa (Homo sapiens (Human)).